A 537-amino-acid polypeptide reads, in one-letter code: Putative cysteine ligase BshC (537 aa).

The stretch at 417-457 (ASEQFLNELDQLEAQQKETYERLAAEVQGNEDNKNLVEKNN) forms a coiled coil.

Belongs to the BshC family.

Its function is as follows. Involved in bacillithiol (BSH) biosynthesis. May catalyze the last step of the pathway, the addition of cysteine to glucosamine malate (GlcN-Mal) to generate BSH. This chain is Putative cysteine ligase BshC, found in Staphylococcus carnosus (strain TM300).